The sequence spans 207 residues: Ras-related protein Rab-5B (207 aa).

Gly2 carries the N-myristoyl glycine lipid modification. GTP-binding positions include 41–49, 60–66, 90–94, 148–151, and 176–178; these read GDSGVGKSS, SEKHQVT, DTGGQ, NKKD, and SAK. The short motif at 63–71 is the Effector region element; that stretch reads HQVTIGAAF.

The protein belongs to the small GTPase superfamily. Rab family. As to quaternary structure, interacts with CK1. May interact with ARF1. Post-translationally, myristoylation is required for cell membrane and food vacuole membrane localization. May be palmitoylated on Cys-3. In terms of processing, lacks the C-terminal cysteine motifs subject to isoprenylation present in mammalian RAB5B homolog.

The protein resides in the cell membrane. It is found in the vacuole membrane. It localises to the vesicle. The enzyme catalyses GTP + H2O = GDP + phosphate + H(+). With respect to regulation, alternates between an inactive GDP-bound form and an active GTP-bound form. Activated by guanine nucleotide-exchange factors (GEFs) and inactivated by GTPase-activating proteins (GAPs). Functionally, small GTPase which regulates vesicle trafficking between organelles. May be involved in the trafficking of the N-myristoylated AK2 from the endoplasmic reticulum to the parasitophorous vacuole membrane. This chain is Ras-related protein Rab-5B, found in Plasmodium falciparum (isolate 3D7).